The sequence spans 524 residues: MGIVINLLLLVLAALVAFVAGFFIGRYFLERIGTTKVLEAEERAVQIVQEAQKEANEYKELKVSEVNQEWKKKRREFEQDVLIKNNKFAQLQKQLQQREAQLKKQSQDVRDAERKLQDQRKEVEQLSDSVKLRATELERVIVEQNQRLESISNLQADEARQMLIDNMVTQAREEASNTIHRIHEEAEQQATRMAEKTLITAIQRISFEQTTENALSVVHIQSDELKGRIIGREGRNIKAFENATGVDIIVDDTPEVVILSCFDPLRRELAKLTLKKLLADGIIHPVAIEKAYADATKEIDDVVYSAGEEVAASLQLNDIPTEVIALLGKMKFHTVYGQNLLQHSREVAMLAGVMAAELKLDARMAKRAGLLHDIGLVLPESDEPHAITGMNFMKKFNESDQLLNAIGAHHGDMEKESPLADLVDAANTISLSRPGARGAVTADGNVKRLESLEEIAKGFPGVLKTYALQAGREIRVIVEGDNVSDSQADMLAHDIARKIESEAQYPGQIKVSIIREKRSVAYAK.

The helical transmembrane segment at 3–23 (IVINLLLLVLAALVAFVAGFF) threads the bilayer. The KH domain occupies 214-280 (ALSVVHIQSD…KLTLKKLLAD (67 aa)). One can recognise an HD domain in the interval 340–432 (LLQHSREVAM…VDAANTISLS (93 aa)).

It belongs to the RNase Y family.

It is found in the cell membrane. Its function is as follows. Endoribonuclease that initiates mRNA decay. In Chlorobium chlorochromatii (strain CaD3), this protein is Ribonuclease Y.